We begin with the raw amino-acid sequence, 134 residues long: Large ribosomal subunit protein bL12 (134 aa).

It belongs to the bacterial ribosomal protein bL12 family. As to quaternary structure, homodimer. Part of the ribosomal stalk of the 50S ribosomal subunit. Forms a multimeric L10(L12)X complex, where L10 forms an elongated spine to which 2 to 4 L12 dimers bind in a sequential fashion. Binds GTP-bound translation factors.

Functionally, forms part of the ribosomal stalk which helps the ribosome interact with GTP-bound translation factors. Is thus essential for accurate translation. This is Large ribosomal subunit protein bL12 from Anaplasma phagocytophilum (strain HZ).